The primary structure comprises 653 residues: Brain-enriched guanylate kinase-associated protein (653 aa).

A Phosphotyrosine modification is found at tyrosine 186. Residues proline 241–tyrosine 271 form a disordered region. The segment covering serine 243–serine 252 has biased composition (polar residues). A phosphoserine mark is found at serine 249, serine 278, serine 295, and serine 314. Positions arginine 288–glycine 329 are disordered. The span at threonine 315–glutamate 327 shows a compositional bias: acidic residues. A phosphoserine mark is found at serine 400 and serine 427. An Asymmetric dimethylarginine modification is found at arginine 435. Residues serine 523, serine 533, serine 535, serine 558, serine 560, serine 564, serine 613, and serine 623 each carry the phosphoserine modification. The interval glycine 587 to asparagine 653 is disordered.

Interacts with DLG4 and DLGAP1 and forms a ternary complex.

It localises to the cytoplasm. The protein localises to the membrane. May sustain the structure of the postsynaptic density (PSD). The chain is Brain-enriched guanylate kinase-associated protein (BEGAIN) from Ovis aries (Sheep).